Consider the following 155-residue polypeptide: Small ribosomal subunit protein uS15 (155 aa).

Basic residues predominate over residues 1–10; it reads MARMHTRRRG. The segment at 1–66 is disordered; it reads MARMHTRRRG…EGVQGTPVPD (66 aa). Residues 21–33 show a composition bias toward acidic residues; the sequence is EPPEWSDVDEDAI. A compositionally biased stretch (basic and acidic residues) spans 34 to 45; it reads EERVVELAEQGH.

This sequence belongs to the universal ribosomal protein uS15 family. Part of the 30S ribosomal subunit.

This is Small ribosomal subunit protein uS15 from Halobacterium salinarum (strain ATCC 700922 / JCM 11081 / NRC-1) (Halobacterium halobium).